A 997-amino-acid chain; its full sequence is Malignant fibrous histiocytoma-amplified sequence 1 homolog (997 aa).

14 LRR repeats span residues 32–53 (SLRQ…ADLG), 54–76 (DVEV…QSLS), 79–100 (NLHV…VYHL), 102–123 (RLTE…VGLL), 125–146 (KLKK…LGML), 148–170 (DLEE…QGLP), 171–192 (SLRT…LFHV), 194–216 (ALEE…IRSM), 218–239 (SLKI…ICEL), 241–262 (NLES…FGAL), 264–286 (KLKM…LQLV), 287–308 (DLEE…ISCM), 310–331 (KLVT…IVEL), and 333–354 (FLEE…FGKL). The region spanning 393-626 (QPAVKPRLKL…EKLLSVAEHR (234 aa)) is the Roc domain. Residues 637 to 861 (PKSWQMLEEL…RFSVQINSHI (225 aa)) form the COR domain.

The protein resides in the cytoplasm. Probable GTP-binding protein. Functions in innate immunity and more specifically the inflammatory response as a regulator of the Toll-like receptor TLR2 and TLR4 signaling pathways. This chain is Malignant fibrous histiocytoma-amplified sequence 1 homolog (mfhas1), found in Xenopus tropicalis (Western clawed frog).